The chain runs to 461 residues: Ribulose bisphosphate carboxylase (461 aa).

Position 112 (Asn-112) interacts with substrate. Lys-167 (proton acceptor) is an active-site residue. A substrate-binding site is contributed by Lys-169. 3 residues coordinate Mg(2+): Lys-192, Asp-194, and Glu-195. At Lys-192 the chain carries N6-carboxylysine. His-288 serves as the catalytic Proton acceptor. Substrate is bound by residues Arg-289, His-322, and Ser-369.

This sequence belongs to the RuBisCO large chain family. Type II subfamily. Homodimer. The cofactor is Mg(2+).

The catalysed reaction is 2 (2R)-3-phosphoglycerate + 2 H(+) = D-ribulose 1,5-bisphosphate + CO2 + H2O. It carries out the reaction D-ribulose 1,5-bisphosphate + O2 = 2-phosphoglycolate + (2R)-3-phosphoglycerate + 2 H(+). In terms of biological role, ruBisCO catalyzes two reactions: the carboxylation of D-ribulose 1,5-bisphosphate, the primary event in carbon dioxide fixation, as well as the oxidative fragmentation of the pentose substrate. Both reactions occur simultaneously and in competition at the same active site. In Rhodopseudomonas palustris (strain BisB18), this protein is Ribulose bisphosphate carboxylase.